The chain runs to 149 residues: Ribonuclease pancreatic (149 aa).

An N-terminal signal peptide occupies residues 1 to 25 (MGLEKSLILLPLLVLVLAWVQPSLG). Positions 32 and 35 each coordinate substrate. His37 (proton acceptor) is an active-site residue. 4 disulfides stabilise this stretch: Cys51-Cys109, Cys65-Cys120, Cys83-Cys135, and Cys90-Cys97. 66-70 (KRVNT) serves as a coordination point for substrate. Residue Asn87 is glycosylated (N-linked (GlcNAc...) asparagine). Substrate is bound by residues Lys91 and Arg110. Catalysis depends on His144, which acts as the Proton donor.

It belongs to the pancreatic ribonuclease family. As to quaternary structure, monomer. Interacts with and forms tight 1:1 complexes with RNH1. Dimerization of two such complexes may occur. Interaction with RNH1 inhibits this protein. As to expression, pancreas.

It localises to the secreted. The enzyme catalyses an [RNA] containing cytidine + H2O = an [RNA]-3'-cytidine-3'-phosphate + a 5'-hydroxy-ribonucleotide-3'-[RNA].. It catalyses the reaction an [RNA] containing uridine + H2O = an [RNA]-3'-uridine-3'-phosphate + a 5'-hydroxy-ribonucleotide-3'-[RNA].. In terms of biological role, endonuclease that catalyzes the cleavage of RNA on the 3' side of pyrimidine nucleotides. Acts on single-stranded and double-stranded RNA. In Acomys cahirinus (Cairo spiny mouse), this protein is Ribonuclease pancreatic (RNASE1).